Consider the following 871-residue polypeptide: Metabotropic glutamate receptor 6 (871 aa).

Residues 1–23 form the signal peptide; that stretch reads MGRLPVLLLWLAWWLSQAGIACG. At 24 to 579 the chain is on the extracellular side; that stretch reads AGSVRLAGGL…VVRLTWSSPW (556 aa). A disulfide bond links cysteine 51 and cysteine 93. Residues serine 148, 169-171, and tyrosine 219 each bind L-glutamate; that span reads AST. 7 cysteine pairs are disulfide-bonded: cysteine 238–cysteine 530, cysteine 361–cysteine 377, cysteine 417–cysteine 424, cysteine 512–cysteine 531, cysteine 516–cysteine 534, cysteine 537–cysteine 549, and cysteine 552–cysteine 565. Asparagine 290 carries N-linked (GlcNAc...) asparagine glycosylation. Aspartate 301 contacts L-glutamate. Lysine 394 is a binding site for L-glutamate. N-linked (GlcNAc...) asparagine glycans are attached at residues asparagine 445 and asparagine 473. N-linked (GlcNAc...) asparagine glycosylation is present at asparagine 561. A helical membrane pass occupies residues 580 to 602; sequence AALPLLLAVLGIMATTTIMATFM. Topologically, residues 603 to 616 are cytoplasmic; that stretch reads RHNDTPIVRASGRE. A helical membrane pass occupies residues 617 to 637; the sequence is LSYVLLTGIFLIYAITFLMVA. Over 638–648 the chain is Extracellular; sequence EPCAAICAARR. Residues 649-667 form a helical membrane-spanning segment; the sequence is LLLGLGTTLSYSALLTKTN. Residues 668-691 lie on the Cytoplasmic side of the membrane; that stretch reads RIYRIFEQGKRSVTPPPFISPTSQ. The chain crosses the membrane as a helical span at residues 692–712; that stretch reads LVITFGLTSLQVVGVIAWLGA. The Extracellular portion of the chain corresponds to 713–742; it reads QPPHSVIDYEEQRTVDPEQARGVLKCDMSD. A helical membrane pass occupies residues 743 to 764; that stretch reads LSLIGCLGYSLLLMVTCTVYAI. Over 765-777 the chain is Cytoplasmic; the sequence is KARGVPETFNEAK. Residues 778–800 form a helical membrane-spanning segment; it reads PIGFTMYTTCIIWLAFVPIFFGT. At 801 to 813 the chain is on the extracellular side; the sequence is AQSAEKIYIQTTT. The helical transmembrane segment at 814 to 839 threads the bilayer; it reads LTVSLSLSASVSLGMLYVPKTYVILF. Topologically, residues 840-871 are cytoplasmic; it reads HPEQNVQKRKRSLKKTSTMAAPPQNENAEDAK. Residues 850–871 form a disordered region; it reads RSLKKTSTMAAPPQNENAEDAK.

The protein belongs to the G-protein coupled receptor 3 family. Homodimer. Interacts with GPR179. Interacts with photoreceptor synaptic protein LRIT1 (via its N-terminal extracellular domain). Restricted expression in the inner nuclear layer of the retina.

Its subcellular location is the cell membrane. It localises to the endoplasmic reticulum membrane. It is found in the golgi apparatus membrane. The protein resides in the cell projection. The protein localises to the dendrite. Functionally, G-protein coupled receptor for glutamate. Ligand binding causes a conformation change that triggers signaling via guanine nucleotide-binding proteins (G proteins) and modulates the activity of down-stream effectors, such as adenylate cyclase. Signaling inhibits adenylate cyclase activity. Signaling stimulates TRPM1 channel activity and Ca(2+) uptake. Required for normal vision. The chain is Metabotropic glutamate receptor 6 (Grm6) from Rattus norvegicus (Rat).